A 276-amino-acid polypeptide reads, in one-letter code: MRVSVPVLALAFGSLAAAAPNAGRRTCGSVPPPEFFEASEKVAALEESGAFADLQAPIEVETYFHVVASSRSERDGYISDQMLSDQIRVMNEDYAPHGVHFNLRETTRTINPSWASDGNEIAMKRSLRKGGYAALNVYFLKDLGGALGYCYFPTNAAPGSTTFIRDGCSVLSSSVPGGSGAPYDLGKTATHEVGHWMGLFHTFQGGCSGQGDYVSDTPPQRSPSSGCPVGRDSCPGGGVDPIHNYMDYSVDSCMNQFTRGQGTRMSSMWRQFRAGK.

Residues 1 to 18 (MRVSVPVLALAFGSLAAA) form the signal peptide. His-191 is a Zn(2+) binding site. The active site involves Glu-192. Position 195 (His-195) interacts with Zn(2+). Residues 211 to 233 (GDYVSDTPPQRSPSSGCPVGRDS) are disordered. Cys-227 and Cys-253 are joined by a disulfide.

This sequence belongs to the peptidase M43B family.

Its subcellular location is the secreted. Functionally, secreted metalloproteinase that allows assimilation of proteinaceous substrates. Pays a pivotal role as a pathogenicity determinant during infections and contributes to the ability of the pathogen to persist within the mammalian host. Digests an immunodominant cell surface antigen (SOWgp) and prevents host recognition of endospores during the phase of development when these fungal cells are most vulnerable to phagocytic cell defenses. The protein is Extracellular metalloprotease 1 (MEP1) of Coccidioides posadasii (strain C735) (Valley fever fungus).